Reading from the N-terminus, the 1676-residue chain is Protein TIC 214 (1676 aa).

Helical transmembrane passes span 23–43, 71–91, 96–116, 145–165, 179–199, and 226–246; these read AGPL…PIAP, GILI…FLSI, LYMI…YMFF, AFLD…SPVM, VSLF…MFVL, and IFPP…PVSF.

This sequence belongs to the TIC214 family. As to quaternary structure, part of the Tic complex.

The protein localises to the plastid. The protein resides in the chloroplast inner membrane. In terms of biological role, involved in protein precursor import into chloroplasts. May be part of an intermediate translocation complex acting as a protein-conducting channel at the inner envelope. The sequence is that of Protein TIC 214 from Zygnema circumcarinatum (Green alga).